Reading from the N-terminus, the 185-residue chain is Ribosome-recycling factor (185 aa).

This sequence belongs to the RRF family.

It is found in the cytoplasm. Responsible for the release of ribosomes from messenger RNA at the termination of protein biosynthesis. May increase the efficiency of translation by recycling ribosomes from one round of translation to another. This chain is Ribosome-recycling factor, found in Alkaliphilus oremlandii (strain OhILAs) (Clostridium oremlandii (strain OhILAs)).